A 132-amino-acid chain; its full sequence is Fluoride-specific ion channel FluC (132 aa).

A run of 4 helical transmembrane segments spans residues 5–25 (LYIA…SGLV), 32–52 (TFPW…GFFA), 70–90 (FVMT…LQTL), and 105–125 (VVGS…AAVG). Residues Gly-77 and Thr-80 each contribute to the Na(+) site.

The protein belongs to the fluoride channel Fluc/FEX (TC 1.A.43) family.

The protein resides in the cell inner membrane. The catalysed reaction is fluoride(in) = fluoride(out). With respect to regulation, na(+) is not transported, but it plays an essential structural role and its presence is essential for fluoride channel function. Its function is as follows. Fluoride-specific ion channel. Important for reducing fluoride concentration in the cell, thus reducing its toxicity. The polypeptide is Fluoride-specific ion channel FluC (Opitutus terrae (strain DSM 11246 / JCM 15787 / PB90-1)).